We begin with the raw amino-acid sequence, 604 residues long: Protein CBFA2T1 (604 aa).

The interval 32–114 (TEKHSTMPDS…SSSSLANQQL (83 aa)) is disordered. Ser-41 bears the Phosphoserine mark. The segment covering 63–86 (QGAPRTSSFTPTTLTNGTSHSPTA) has biased composition (polar residues). The span at 95–114 (NGFSNGPSSSSSSSLANQQL) shows a compositional bias: low complexity. In terms of domain architecture, TAFH spans 120 to 215 (ARQLSKLKRF…NPAQYLAQHE (96 aa)). Residues 230 to 298 (SELLLDVNEN…LPHPTPPPPQ (69 aa)) form a disordered region. A compositionally biased stretch (basic and acidic residues) spans 238 to 264 (ENGKRRTPDRTKENGFDREPLHSEHPS). Polar residues predominate over residues 271–285 (SPGQRYSPNNGLSYQ). Over residues 289–298 (LPHPTPPPPQ) the composition is skewed to pro residues. The interval 337 to 383 (QEEMIDHRLTDREWAEEWKHLDHLLNCIMDMVEKTRRSLTVLRRCQE) is important for oligomerization. Residues 337 to 383 (QEEMIDHRLTDREWAEEWKHLDHLLNCIMDMVEKTRRSLTVLRRCQE) are nervy homology region 2 (NHR2). Positions 401–423 (DLKKGGGSSSSHSRQQSPVNPDP) are disordered. Phosphoserine is present on Ser-417. The interval 443-492 (EEIWKKAEEAVNEVKRQAMTELQKAVSEAERKAHDMITTERAKMERTVAE) is nervy homology region 3 (NHR3). Cys-515, Cys-518, Cys-526, Cys-529, Cys-535, Cys-539, His-547, and Cys-551 together coordinate Zn(2+). The MYND-type zinc finger occupies 515-551 (CWNCGRKASETCSGCNTARYCGSFCQHKDWEKHHHIC). Residues 557-576 (AQQQGDTPAVSSSVTPNSGA) are compositionally biased toward polar residues. The interval 557 to 604 (AQQQGDTPAVSSSVTPNSGAGSPMDTPPAATPRSTTPGTPSTIETTPR) is disordered. The segment covering 587-604 (TPRSTTPGTPSTIETTPR) has biased composition (low complexity).

Belongs to the CBFA2T family. As to quaternary structure, homooligomer. Homotetramerization is mediated by nervy homology region 2 (NRH2). Can interact with CBFA2T2 and CBFA2T3; heterotetramerization between members of the CBFA2T family is proposed. Interacts with TCF12, SIN3A, HDAC1, HDAC2, HDAC3, NCOR1, NCOR2. Interacts with ATN1 (via its N-terminus); the interaction enhances the transcriptional repression. Interacts (via its N-terminus) with ZBTB16; the interaction increases the transcription repression activity of ZBTB16. AML1-MTG8/ETO fusion protein interacts with CBFB. AML1-MTG8/ETO is part of a stable transcription factor complex AETFC in leukemic cells; AETFC formation seems to be involved in recruitment of EP300. AML1-MTG8/ETO nervy homology region 2-mediated oligomerization is proposed to be homotypic, required for AML1-MTG8/ETO-mediated transformation of primary hematopoietic cells and is required for AML1-MTG8/ETO interaction with TCF12. Most abundantly expressed in brain. Lower levels in lung, heart, testis and ovary.

The protein resides in the nucleus. Transcriptional corepressor which facilitates transcriptional repression via its association with DNA-binding transcription factors and recruitment of other corepressors and histone-modifying enzymes. Can repress the expression of MMP7 in a ZBTB33-dependent manner. Can repress transactivation mediated by TCF12. Acts as a negative regulator of adipogenesis. The AML1-MTG8/ETO fusion protein frequently found in leukemic cells is involved in leukemogenesis and contributes to hematopoietic stem/progenitor cell self-renewal. The polypeptide is Protein CBFA2T1 (RUNX1T1) (Homo sapiens (Human)).